The sequence spans 295 residues: Secreted frizzled-related protein 2 (295 aa).

The signal sequence occupies residues 1 to 24 (MLQGPGSLLLLFLASHCCLGSARG). Positions 35 to 155 (YKRSNCKPIP…PQDNDLCIPL (121 aa)) constitute an FZ domain. Disulfide bonds link Cys-40–Cys-103, Cys-50–Cys-96, Cys-87–Cys-125, Cys-114–Cys-152, Cys-118–Cys-142, Cys-172–Cys-245, Cys-175–Cys-247, and Cys-190–Cys-295. The NTR domain occupies 172–295 (CEACKNKNDD…ISRSIRKLQC (124 aa)).

Belongs to the secreted frizzled-related protein (sFRP) family. As to expression, expressed in adipose tissue, heart, brain, skeletal muscle, pancreas, thymus, prostate, testis, ovary, small intestine and colon. Highest levels in adipose tissue, small intestine and colon.

The protein localises to the secreted. Soluble frizzled-related proteins (sFRPS) function as modulators of Wnt signaling through direct interaction with Wnts. They have a role in regulating cell growth and differentiation in specific cell types. SFRP2 may be important for eye retinal development and for myogenesis. The sequence is that of Secreted frizzled-related protein 2 (SFRP2) from Homo sapiens (Human).